Here is a 664-residue protein sequence, read N- to C-terminus: Intraflagellar transport protein 70A1 (664 aa).

TPR repeat units lie at residues 11-44, 45-78, 153-186, 188-220, 393-423, 424-456, and 458-491; these read DGEF…SSRS, RAGL…HPEL, PDGL…SGYQ, DLSY…GIRQ, TKQV…EKYI, PVLM…CNDH, and VWKL…NYDN. Residues 507–534 are a coiled coil; that stretch reads YIMTSQNEEAEELMRKIEKEEEQLSYGD. One copy of the TPR 8 repeat lies at 543–576; it reads CIVNLVIGTLYCAKGNYDFGISRVIKSLEPYHKK.

The protein belongs to the TTC30/dfy-1/fleer family. Interacts wit the IFT B complex component IFT52.

The protein resides in the cell projection. Its subcellular location is the cilium. Functionally, required for polyglutamylation of axonemal tubulin. Plays a role in anterograde intraflagellar transport (IFT), the process by which cilia precursors are transported from the base of the cilium to the site of their incorporation at the tip. The sequence is that of Intraflagellar transport protein 70A1 (Ift70a1) from Mus musculus (Mouse).